We begin with the raw amino-acid sequence, 597 residues long: Kelch-like protein 21 (597 aa).

The 69-residue stretch at 35–103 (LDVTLEAAGG…SYTGRVAVSG (69 aa)) folds into the BTB domain. The BACK domain occupies 138 to 239 (CLDMQDFAEA…RRFYLLAHVE (102 aa)). Kelch repeat units lie at residues 287–335 (ILVL…ALGN), 336–382 (DIYV…VLNG), 384–422 (LYVV…ACRG), 423–470 (RLYA…TLNG), 472–512 (MYFV…ALGG), and 513–560 (KLYV…SIFR). A disordered region spans residues 570–597 (GRGFELNSGSSDVDAGHHRLPQNPEELQ).

As to quaternary structure, component of the BCR(KLHL21) E3 ubiquitin ligase complex, at least composed of CUL3, KLHL21 and RBX1.

The protein localises to the cytoplasm. It is found in the cytoskeleton. It localises to the spindle. The protein operates within protein modification; protein ubiquitination. In terms of biological role, substrate-specific adapter of BCR (BTB-CUL3-RBX1) E3 ubiquitin-protein ligase complex required for efficient chromosome alignment and cytokinesis. The BCR(KLHL21) E3 ubiquitin ligase complex regulates localization of the chromosomal passenger complex (CPC) from chromosomes to the spindle midzone in anaphase and mediates the ubiquitination of AURKB. Ubiquitination of AURKB by BCR(KLHL21) E3 ubiquitin ligase complex may not lead to its degradation by the proteasome. In Rattus norvegicus (Rat), this protein is Kelch-like protein 21 (Klhl21).